Reading from the N-terminus, the 152-residue chain is MIDREQIVRIVSDYLSTGETFLVEVAIHPGNRILVELDSAQGVCIDECVALSRHIESQVDRDIEDYELEVGSTGLTSPLKVMRQWENCIDSELSVLLTNGMKETGRLITVAPEAIKLEVVRMVKPEGAKRKKPETQELTIVMADIKQAVRII.

This sequence belongs to the RimP family.

It is found in the cytoplasm. Required for maturation of 30S ribosomal subunits. The sequence is that of Ribosome maturation factor RimP from Porphyromonas gingivalis (strain ATCC BAA-308 / W83).